Here is a 201-residue protein sequence, read N- to C-terminus: Protein lin-7 homolog B (201 aa).

A Kinase interacting site motif is present at residues 1-13; the sequence is MAALVEPLGLERE. The L27 domain occupies 10–65; that stretch reads LEREVSRAVELLERLQRSGELPPQKLQALQRVLQSRFCSAIREVYEQLYDTLDITG. The PDZ domain occupies 93 to 175; it reads VVELPKTDEG…SVKLVVRYTP (83 aa).

This sequence belongs to the lin-7 family. In terms of assembly, forms a complex with CASK and CASKIN1. Component of the brain-specific heterotrimeric complex (LIN-10-LIN-2-LIN-7 complex) composed of at least APBA1, CASK, and LIN7, which associates with the motor protein KIF17 to transport vesicles along microtubules. Forms a heterotrimeric complex composed of MMP5, LIN7B and PATJ; the N-terminal L27 domain of PALS1 interacts with the L27 domain of PATJ and the C-terminal L27 domain of PALS1 interacts with the L27 domain of LIN7B. Forms a heterotrimeric complex with DLG1 and CASK via their L27 domains. Interacts with DLG4 and GRIN2B as well as CDH1 and CTNNB1, the channels KCNJ12/Kir2.2, KCNJ4/Kir2.3 and probably KCNJ2/Kir2.1 and SLC6A12/BGT-1 via its PDZ domain. The association of LIN7A with cadherin and beta-catenin is calcium-dependent, occurs at synaptic junctions and requires the actin cytoskeleton. Interacts with EGFR, ERBB2, ERBB3 and ERBB4 with both PDZ and KID domains. Interacts with ASIC3. Interacts with TOPK. Interacts with RTKN. Associates with KIF17 via APBA1. Interacts with APBA1. Interacts with MPP7. Interacts with DLG2. Interacts with DLG3.

The protein localises to the cell membrane. The protein resides in the basolateral cell membrane. Its subcellular location is the cell junction. It is found in the postsynaptic density membrane. It localises to the tight junction. Its function is as follows. Plays a role in establishing and maintaining the asymmetric distribution of channels and receptors at the plasma membrane of polarized cells. Forms membrane-associated multiprotein complexes that may regulate delivery and recycling of proteins to the correct membrane domains. The tripartite complex composed of LIN7 (LIN7A, LIN7B or LIN7C), CASK and APBA1 associates with the motor protein KIF17 to transport vesicles containing N-methyl-D-aspartate (NMDA) receptor subunit NR2B along microtubules. This complex may have the potential to couple synaptic vesicle exocytosis to cell adhesion in brain. Ensures the proper localization of GRIN2B (subunit 2B of the NMDA receptor) to neuronal postsynaptic density and may function in localizing synaptic vesicles at synapses where it is recruited by beta-catenin and cadherin. Required to localize Kir2 channels, GABA transporter (SLC6A12) and EGFR/ERBB1, ERBB2, ERBB3 and ERBB4 to the basolateral membrane of epithelial cells. May increase the amplitude of ASIC3 acid-evoked currents by stabilizing the channel at the cell surface. In Bos taurus (Bovine), this protein is Protein lin-7 homolog B (LIN7B).